The sequence spans 2603 residues: Ankyrin repeat domain-containing protein 17 (2603 aa).

The residue at position 1 (Met-1) is an N-acetylmethionine. Low complexity-rich tracts occupy residues 1-34 and 42-53; these read MEKA…AAAE and SSRARSASSPRG. Residues 1 to 143 are disordered; it reads MEKATVPVAA…SFILDQDDLE (143 aa). 2 positions are modified to phosphoserine: Ser-19 and Ser-50. Residues 63–79 are compositionally biased toward basic residues; that stretch reads KKKPPQQQHHKAKRNRT. Positions 84–94 are enriched in low complexity; sequence SSSESSSDSDN. Residues 95–111 are compositionally biased toward gly residues; it reads SGGGGGGGGGGGGGGGT. The segment covering 116-131 has biased composition (acidic residues); sequence SEEEEDDDDEEEEVSE. Ser-156 carries the phosphoserine modification. 15 ANK repeats span residues 233 to 262, 266 to 295, 300 to 329, 333 to 362, 366 to 395, 400 to 429, 433 to 462, 466 to 495, 499 to 528, 533 to 562, 563 to 592, 596 to 625, 629 to 658, 663 to 692, and 696 to 725; these read SDNR…SVNE, EGES…NVED, GDIT…DVNA, TGNT…SIED, NGHT…GINT, FKES…DQEH, EMHT…QVNM, SFES…SLEE, EGYT…NINA, TQET…DIEL, GCST…NVHA, TGDT…DLEH, GGRT…NVNR, NDHT…DPTH, and DGST…NLLS. Lys-318 participates in a covalent cross-link: Glycyl lysine isopeptide (Lys-Gly) (interchain with G-Cter in SUMO2). Position 803 is a phosphoserine (Ser-803). ANK repeat units lie at residues 1082 to 1111, 1115 to 1144, 1149 to 1178, 1182 to 1211, 1217 to 1246, 1251 to 1280, 1284 to 1313, 1319 to 1348, 1352 to 1381, and 1385 to 1414; these read NHDT…SIEH, KGFT…DIEA, TKDT…NKEH, SDYT…EINS, LGIS…DINA, NRNT…NVEH, TGLT…DVNA, SRDT…HIDV, KGNT…DVDA, and RKIT…QFPS. The stretch at 1442–1526 forms a coiled coil; the sequence is VQAKDRQAAE…EKEKLKVEDE (85 aa). Ser-1457 is modified (phosphoserine). Disordered regions lie at residues 1479–1500 and 1517–1717; these read AKRE…RKLE and EKEK…QKRE. Residues 1481–1491 show a composition bias toward basic residues; that stretch reads REKRKEKRRKK. 3 stretches are compositionally biased toward low complexity: residues 1531–1550, 1602–1611, and 1620–1632; these read TEPP…TWTT, ESKSSSTSES, and SSCS…SNSS. 2 positions are modified to phosphoserine: Ser-1635 and Ser-1639. Composition is skewed to polar residues over residues 1642 to 1652 and 1675 to 1703; these read VVTTTVSSKKQ and LSET…SPNG. Phosphoserine occurs at positions 1696, 1700, and 1709. The region spanning 1725–1789 is the KH domain; the sequence is RRSKKVSVPS…ESTRQATQLI (65 aa). The residue at position 1874 (Arg-1874) is an Asymmetric dimethylarginine. Disordered stretches follow at residues 1906–1995, 2011–2192, and 2273–2332; these read PRLP…PSVR, TTVT…HKNS, and VVSS…YGSV. 2 stretches are compositionally biased toward low complexity: residues 1950–1995 and 2011–2028; these read SNQN…PSVR and TTVT…TNAT. Phosphoserine is present on residues Ser-2042, Ser-2044, Ser-2045, Ser-2047, Ser-2059, and Ser-2067. A compositionally biased stretch (polar residues) spans 2066-2078; the sequence is ASPNKVASSSEQE. Residues 2095–2106 are compositionally biased toward low complexity; that stretch reads SSSSSGSSSAHS. Composition is skewed to polar residues over residues 2107–2127 and 2273–2303; these read NQQQ…QQSQ and VVSS…SDTS. Residues 2308-2318 are compositionally biased toward pro residues; the sequence is FRPPLQRPAPS. Residues Ser-2373 and Ser-2401 each carry the phosphoserine modification. Residues 2381 to 2423 are disordered; it reads CSSASNDSSAQSVSSGVRAPSPAPSSVPLGSEKPSNVSQDRKV. Residues 2382 to 2411 show a composition bias toward low complexity; the sequence is SSASNDSSAQSVSSGVRAPSPAPSSVPLGS.

As to quaternary structure, interacts (via N-terminus) with NOD2. Interacts with CDK2, MCM3, MCM5, MCM7, CDC6 and PCNA. Interacts with MAVS and IFIH1. Interacts (via the second ankyrin repeat cluster) with DDX58. In terms of assembly, (Microbial infection) Interacts with enterovirus 71/EV71 capsid protein VP1. Post-translationally, phosphorylated by CDK2. In terms of tissue distribution, ubiquitously expressed.

The protein localises to the cytoplasm. It is found in the nucleus. Functionally, could play pivotal roles in cell cycle and DNA regulation. Involved in innate immune defense against viruse by positively regulating the viral dsRNA receptors DDX58 and IFIH1 signaling pathways. Involves in NOD2- and NOD1-mediated responses to bacteria suggesting a role in innate antibacterial immune pathways too. Target of enterovirus 71 which is the major etiological agent of HFMD (hand, foot and mouth disease). Could play a central role for the formation and/or maintenance of the blood vessels of the circulation system. In Homo sapiens (Human), this protein is Ankyrin repeat domain-containing protein 17 (ANKRD17).